We begin with the raw amino-acid sequence, 74 residues long: MKLTCVVIVAVLLLTACQLIIAEDSRGTQLHRALRKATKLSVSTRTCVMFGSMCDKEEHSICCYECDYKKGICV.

Residues 1-22 form the signal peptide; the sequence is MKLTCVVIVAVLLLTACQLIIA. Positions 23 to 45 are excised as a propeptide; that stretch reads EDSRGTQLHRALRKATKLSVSTR. Intrachain disulfides connect Cys47/Cys63, Cys54/Cys66, and Cys62/Cys73.

Belongs to the conotoxin O1 superfamily. In terms of tissue distribution, expressed by the venom duct.

It is found in the secreted. The protein is Conotoxin Bu4 of Conus bullatus (Bubble cone).